The following is a 668-amino-acid chain: MEDKFANLSLHEKTGKSSIQLNEQTGSDNGSAVKRTSSTSSHYNNINADLHARVKAFQEQRALKRSASVGSNQSEQDKGSSQSPKHIQQIVNKPLPPLPVAGSSKVSQRMSSQVVQASSKSTLKNVLDNQETQNITDVNINIDTTKITATTIGVNTGLPATDITPSVSNTASATHKAQLLNPNRRAPRRPLSTQHPTRPNVAPHKAPAIINTPKQSLSARRGLKLPPGGMSLKMPTKTAQQPQQFAPSPSNKKHIETLSNSKVVEGKRSNPGSLINGVQSTSTSSSTEGPHDTVGTTPRTGNSNNSSNSGSSGGGGLFANFSKYVDIKSGSLNFAGKLSLSSKGIDFSNGSSSRITLDELEFLDELGHGNYGNVSKVLHKPTNVIMATKEVRLELDEAKFRQILMELEVLHKCNSPYIVDFYGAFFIEGAVYMCMEYMDGGSLDKIYDESSEIGGIDEPQLAFIANAVIHGLKELKEQHNIIHRDVKPTNILCSANQGTVKLCDFGVSGNLVASLAKTNIGCQSYMAPERIKSLNPDRATYTVQSDIWSLGLSILEMALGRYPYPPETYDNIFSQLSAIVDGPPPRLPSDKFSSDAQDFVSLCLQKIPERRPTYAALTEHPWLVKYRNQDVHMSEYITERLERRNKILRERGENGLSKNVPALHMGGL.

Positions 1 to 15 (MEDKFANLSLHEKTG) are enriched in basic and acidic residues. 3 disordered regions span residues 1–43 (MEDK…SSHY), 61–120 (RALK…ASSK), and 181–313 (NPNR…GSSG). Polar residues-rich tracts occupy residues 16–43 (KSSIQLNEQTGSDNGSAVKRTSSTSSHY), 68–91 (SVGSNQSEQDKGSSQSPKHIQQIV), and 104–120 (SKVSQRMSSQVVQASSK). Ser68 carries the post-translational modification Phosphoserine. Low complexity predominate over residues 239–250 (AQQPQQFAPSPS). At Ser269 the chain carries Phosphoserine. The span at 270 to 300 (NPGSLINGVQSTSTSSSTEGPHDTVGTTPRT) shows a compositional bias: polar residues. Residues 301–310 (GNSNNSSNSG) show a composition bias toward low complexity. Residues 360–623 (LEFLDELGHG…YAALTEHPWL (264 aa)) form the Protein kinase domain. ATP-binding positions include 366–374 (LGHGNYGNV) and Lys389. Residue Asp485 is the Proton acceptor of the active site. Ser514 bears the Phosphoserine mark. Thr518 carries the phosphothreonine modification.

The protein belongs to the protein kinase superfamily. STE Ser/Thr protein kinase family. MAP kinase kinase subfamily. Interacts with NBP2, PTC1, SHO1 and STE11. Activated by phosphorylation by SSK2 or SSK22. Ser/Thr phosphorylation is also necessary for SHO1-mediated activation.

It localises to the cytoplasm. It catalyses the reaction L-seryl-[protein] + ATP = O-phospho-L-seryl-[protein] + ADP + H(+). It carries out the reaction L-threonyl-[protein] + ATP = O-phospho-L-threonyl-[protein] + ADP + H(+). The catalysed reaction is L-tyrosyl-[protein] + ATP = O-phospho-L-tyrosyl-[protein] + ADP + H(+). Its function is as follows. Kinase involved in a signal transduction pathway that is activated by changes in the osmolarity of the extracellular environment. Activates the MAP kinase HOG1 by concomitant phosphorylation at 'Thr-174' and 'Tyr-176'. In Saccharomyces cerevisiae (strain ATCC 204508 / S288c) (Baker's yeast), this protein is MAP kinase kinase PBS2 (PBS2).